A 510-amino-acid chain; its full sequence is Histidine ammonia-lyase (510 aa).

Positions 145–147 form a cross-link, 5-imidazolinone (Ala-Gly); sequence ASG. Residue Ser146 is modified to 2,3-didehydroalanine (Ser).

The protein belongs to the PAL/histidase family. Contains an active site 4-methylidene-imidazol-5-one (MIO), which is formed autocatalytically by cyclization and dehydration of residues Ala-Ser-Gly.

It localises to the cytoplasm. The catalysed reaction is L-histidine = trans-urocanate + NH4(+). The protein operates within amino-acid degradation; L-histidine degradation into L-glutamate; N-formimidoyl-L-glutamate from L-histidine: step 1/3. This Stigmatella aurantiaca protein is Histidine ammonia-lyase.